Reading from the N-terminus, the 58-residue chain is DNA-binding protein (58 aa).

Basic residues-rich tracts occupy residues 1 to 19 (MVRR…RSRS) and 28 to 58 (SRYR…NQYI). The interval 1–58 (MVRRRRSRSPYRRRSRSRSRSGSDRSRSRYRSRSRSRSRSRSRARSRSPYHHHINQYI) is disordered.

Post-translationally, probably phosphorylated in infected cells.

It is found in the virion. Thought to be responsible for DNA condensation during packaging of the nucleocapsids. The polypeptide is DNA-binding protein (P7.3) (Cryptophlebia leucotreta granulosis virus (ClGV)).